A 375-amino-acid polypeptide reads, in one-letter code: N5-carboxyaminoimidazole ribonucleotide synthase (375 aa).

Residues Arg-108, Lys-148, 153-159 (GYDGKGQ), 183-186 (EQYL), Glu-191, His-214, and 268-269 (NE) contribute to the ATP site. Residues 112 to 298 (KQTLQDSGSN…QFDTHIKAIT (187 aa)) form the ATP-grasp domain.

Belongs to the PurK/PurT family. As to quaternary structure, homodimer.

It carries out the reaction 5-amino-1-(5-phospho-beta-D-ribosyl)imidazole + hydrogencarbonate + ATP = 5-carboxyamino-1-(5-phospho-D-ribosyl)imidazole + ADP + phosphate + 2 H(+). It functions in the pathway purine metabolism; IMP biosynthesis via de novo pathway; 5-amino-1-(5-phospho-D-ribosyl)imidazole-4-carboxylate from 5-amino-1-(5-phospho-D-ribosyl)imidazole (N5-CAIR route): step 1/2. Its function is as follows. Catalyzes the ATP-dependent conversion of 5-aminoimidazole ribonucleotide (AIR) and HCO(3)(-) to N5-carboxyaminoimidazole ribonucleotide (N5-CAIR). The polypeptide is N5-carboxyaminoimidazole ribonucleotide synthase (Staphylococcus saprophyticus subsp. saprophyticus (strain ATCC 15305 / DSM 20229 / NCIMB 8711 / NCTC 7292 / S-41)).